An 89-amino-acid chain; its full sequence is Probable Fe(2+)-trafficking protein (89 aa).

This sequence belongs to the Fe(2+)-trafficking protein family.

Its function is as follows. Could be a mediator in iron transactions between iron acquisition and iron-requiring processes, such as synthesis and/or repair of Fe-S clusters in biosynthetic enzymes. This is Probable Fe(2+)-trafficking protein from Stenotrophomonas maltophilia (strain K279a).